Consider the following 225-residue polypeptide: MQFLNMFFFDIYPYIAGAVFLIGSWLRYDYGQYTWRAASSQMLDRKGMNLASNLFHIGILGIFVGHFFGMLTPHWMYEAWLPIEVKQKMAMFAGGASGVLCLIGGVLLLKRRLFSPRVRATTTGADILILSLLVIQCALGLLTIPFSAQHMDGSEMMKLVGWAQSVVTFHGGASQHLDGVAFIFRLHLVLGMTLFLLFPFSRLIHIWSVPVEYLTRKYQLVRARH.

An N-formylmethionine modification is found at Met1. Residues 1-3 (MQF) are Periplasmic-facing. A helical transmembrane segment spans residues 4 to 29 (LNMFFFDIYPYIAGAVFLIGSWLRYD). Residues 30–47 (YGQYTWRAASSQMLDRKG) lie on the Cytoplasmic side of the membrane. Residues 48–70 (MNLASNLFHIGILGIFVGHFFGM) traverse the membrane as a helical segment. Heme b contacts are provided by His56 and His66. Topologically, residues 71-82 (LTPHWMYEAWLP) are periplasmic. The helical transmembrane segment at 83 to 112 (IEVKQKMAMFAGGASGVLCLIGGVLLLKRR) threads the bilayer. Over 113-124 (LFSPRVRATTTG) the chain is Cytoplasmic. Residues 125-148 (ADILILSLLVIQCALGLLTIPFSA) traverse the membrane as a helical segment. The Periplasmic segment spans residues 149-182 (QHMDGSEMMKLVGWAQSVVTFHGGASQHLDGVAF). The helical transmembrane segment at 183–198 (IFRLHLVLGMTLFLLF) threads the bilayer. Residues His187 and His205 each contribute to the heme b site. Over 199–225 (PFSRLIHIWSVPVEYLTRKYQLVRARH) the chain is Cytoplasmic.

As to quaternary structure, dimer of heterotrimers each composed of an alpha, a beta and a gamma chain. Alpha and beta are catalytic chains; gamma chains are involved in binding the enzyme complex to the cytoplasmic membrane. Heme is required as a cofactor.

The protein localises to the cell inner membrane. It catalyses the reaction nitrate + a quinol = a quinone + nitrite + H2O. Its function is as follows. The nitrate reductase enzyme complex allows E.coli to use nitrate as an electron acceptor during anaerobic growth. The gamma chain is a membrane-embedded heme-iron unit resembling cytochrome b, which transfers electrons from quinones to the beta subunit. The sequence is that of Respiratory nitrate reductase 1 gamma chain (narI) from Escherichia coli (strain K12).